The following is a 269-amino-acid chain: C-type lectin domain family 1 member A (269 aa).

Over 1 to 51 (MQAKYSSTRDMLDDDDTTISLYSGTSTVTRRAEPRHSENGTPSSVWRPVAL) the chain is Cytoplasmic. A helical; Signal-anchor for type II membrane protein membrane pass occupies residues 52 to 72 (TLLTLCLVLLVGLAALGLVFF). At 73 to 269 (QFYQLSNIQQ…AGRVVPGELQ (197 aa)) the chain is on the extracellular side. Asn94, Asn126, Asn168, and Asn202 each carry an N-linked (GlcNAc...) asparagine glycan. Residues 143–257 (YGDKCYQFYK…CKELRRCACE (115 aa)) form the C-type lectin domain. Disulfide bonds link Cys164/Cys256 and Cys235/Cys248.

It localises to the membrane. This Mus musculus (Mouse) protein is C-type lectin domain family 1 member A (Clec1a).